The sequence spans 552 residues: Probable protein kinase UbiB (552 aa).

In terms of domain architecture, Protein kinase spans 121 to 504; it reads HFDTVPLASA…QGLQRRVVNA (384 aa). ATP-binding positions include 127–135 and Lys149; that span reads LASASISQV. Asp284 (proton acceptor) is an active-site residue. A run of 2 helical transmembrane segments spans residues 501–521 and 526–546; these read VVNAIVGSGLLVAAAVLYGLH and YLGAIPVWSLISGCVGALALF.

It belongs to the ABC1 family. UbiB subfamily.

It is found in the cell inner membrane. It functions in the pathway cofactor biosynthesis; ubiquinone biosynthesis [regulation]. In terms of biological role, is probably a protein kinase regulator of UbiI activity which is involved in aerobic coenzyme Q (ubiquinone) biosynthesis. The sequence is that of Probable protein kinase UbiB from Xylella fastidiosa (strain 9a5c).